Here is a 119-residue protein sequence, read N- to C-terminus: Protein MGF 110-13L-B (119 aa).

An N-terminal signal peptide occupies residues 1–16 (MKLLALLCILIWLSQP).

Belongs to the asfivirus MGF 110 family.

The chain is Protein MGF 110-13L-B from Ornithodoros (relapsing fever ticks).